Here is a 247-residue protein sequence, read N- to C-terminus: Probable transcriptional regulatory protein BHWA1_01533 (247 aa).

The segment at 1–22 (MSGHSKWASIKHKKAANDSKKG) is disordered.

It belongs to the TACO1 family.

The protein resides in the cytoplasm. The protein is Probable transcriptional regulatory protein BHWA1_01533 of Brachyspira hyodysenteriae (strain ATCC 49526 / WA1).